A 319-amino-acid polypeptide reads, in one-letter code: Ribonucleoside-diphosphate reductase small chain (319 aa).

Fe cation contacts are provided by Asp-70, Glu-101, and His-104. Tyr-108 is a catalytic residue. Fe cation is bound by residues Glu-163, Glu-197, and His-200. The tract at residues 313–319 (FSLDVDF) is interaction with R1.

It belongs to the ribonucleoside diphosphate reductase small chain family. Interacts with RNR1/OPG080 subunit. Can interact with host RNR1 supunit. Requires Fe cation as cofactor.

The enzyme catalyses a 2'-deoxyribonucleoside 5'-diphosphate + [thioredoxin]-disulfide + H2O = a ribonucleoside 5'-diphosphate + [thioredoxin]-dithiol. Its function is as follows. Ribonucleoside-diphosphate reductase holoenzyme provides the precursors necessary for viral DNA synthesis. Allows virus growth in non-dividing cells. Catalyzes the biosynthesis of deoxyribonucleotides from the corresponding ribonucleotides. This chain is Ribonucleoside-diphosphate reductase small chain (OPG048), found in Bos taurus (Bovine).